The following is a 178-amino-acid chain: Oligoribonuclease (178 aa).

The region spanning 7–168 is the Exonuclease domain; it reads LIWIDLEMTG…DDIRESIAEL (162 aa). Tyr128 is a catalytic residue.

Belongs to the oligoribonuclease family.

The protein resides in the cytoplasm. In terms of biological role, 3'-to-5' exoribonuclease specific for small oligoribonucleotides. This chain is Oligoribonuclease, found in Pseudomonas syringae pv. syringae (strain B728a).